The primary structure comprises 87 residues: Small ribosomal subunit protein bS21 (87 aa).

Residues 35–52 (HYEKPSEKKAREKAEAVR) are compositionally biased toward basic and acidic residues. A disordered region spans residues 35–87 (HYEKPSEKKAREKAEAVRRARKLARKKLQREGLLPSKPKPAFGADRRPSAAAR). Positions 53-62 (RARKLARKKL) are enriched in basic residues. Residues 78-87 (ADRRPSAAAR) are compositionally biased toward basic and acidic residues.

This Rhodopseudomonas palustris (strain ATCC BAA-98 / CGA009) protein is Small ribosomal subunit protein bS21.